The sequence spans 181 residues: Protein GrpE (181 aa).

Residues 1 to 21 (MNKEQQDLQTEQEAAVETAEL) form a disordered region. A compositionally biased stretch (low complexity) spans 8–21 (LQTEQEAAVETAEL).

The protein belongs to the GrpE family. In terms of assembly, homodimer.

It is found in the cytoplasm. Participates actively in the response to hyperosmotic and heat shock by preventing the aggregation of stress-denatured proteins, in association with DnaK and GrpE. It is the nucleotide exchange factor for DnaK and may function as a thermosensor. Unfolded proteins bind initially to DnaJ; upon interaction with the DnaJ-bound protein, DnaK hydrolyzes its bound ATP, resulting in the formation of a stable complex. GrpE releases ADP from DnaK; ATP binding to DnaK triggers the release of the substrate protein, thus completing the reaction cycle. Several rounds of ATP-dependent interactions between DnaJ, DnaK and GrpE are required for fully efficient folding. This chain is Protein GrpE, found in Trichlorobacter lovleyi (strain ATCC BAA-1151 / DSM 17278 / SZ) (Geobacter lovleyi).